Consider the following 220-residue polypeptide: Large ribosomal subunit protein bL21c (220 aa).

Belongs to the bacterial ribosomal protein bL21 family. As to quaternary structure, part of the 50S ribosomal subunit.

The protein localises to the plastid. It is found in the chloroplast. Its function is as follows. This protein binds to 23S ribosomal RNA in the presence of protein L20. The polypeptide is Large ribosomal subunit protein bL21c (RPL21) (Arabidopsis thaliana (Mouse-ear cress)).